Here is a 600-residue protein sequence, read N- to C-terminus: NADH-quinone oxidoreductase subunit C/D (600 aa).

An NADH dehydrogenase I subunit C region spans residues Met-1–Gln-190. Residues Asp-214–Arg-600 form an NADH dehydrogenase I subunit D region.

It in the N-terminal section; belongs to the complex I 30 kDa subunit family. The protein in the C-terminal section; belongs to the complex I 49 kDa subunit family. NDH-1 is composed of 13 different subunits. Subunits NuoB, CD, E, F, and G constitute the peripheral sector of the complex.

Its subcellular location is the cell inner membrane. It catalyses the reaction a quinone + NADH + 5 H(+)(in) = a quinol + NAD(+) + 4 H(+)(out). Functionally, NDH-1 shuttles electrons from NADH, via FMN and iron-sulfur (Fe-S) centers, to quinones in the respiratory chain. The immediate electron acceptor for the enzyme in this species is believed to be ubiquinone. Couples the redox reaction to proton translocation (for every two electrons transferred, four hydrogen ions are translocated across the cytoplasmic membrane), and thus conserves the redox energy in a proton gradient. This chain is NADH-quinone oxidoreductase subunit C/D, found in Escherichia coli (strain K12 / DH10B).